Reading from the N-terminus, the 146-residue chain is Basic phospholipase A2 paradoxin-like alpha chain (146 aa).

The signal sequence occupies residues 1 to 27 (MHPAHLLVLLAVCVSLLGASDIPPLPL). Disulfide bonds link Cys-38/Cys-99, Cys-54/Cys-145, Cys-56/Cys-72, Cys-71/Cys-126, Cys-78/Cys-119, Cys-88/Cys-112, and Cys-106/Cys-117. The Ca(2+) site is built by Tyr-55, Gly-57, and Gly-59. Residue His-75 is part of the active site. Asp-76 is a Ca(2+) binding site. Residue Asp-120 is part of the active site.

It belongs to the phospholipase A2 family. Group I subfamily. D49 sub-subfamily. In terms of assembly, heterotrimer of alpha, beta, and gamma chains; non-covalently linked. Requires Ca(2+) as cofactor. In terms of tissue distribution, expressed by the venom gland.

The protein localises to the secreted. The catalysed reaction is a 1,2-diacyl-sn-glycero-3-phosphocholine + H2O = a 1-acyl-sn-glycero-3-phosphocholine + a fatty acid + H(+). Its function is as follows. Heterotrimer: Snake venom phospholipase A2 (PLA2) heterotrimer that acts as a potent presynaptic neurotoxin by blocking synaptic transmission and synaptic vesicle recycling. May act by binding in a calcium-dependent fashion to neurotonal pentraxin-1 (NPTX1) and neurotonal pentraxin-2 (NPTX2), but not to neuronal pentraxin receptor (NPTXR). Also binds to taipoxin-associated calcium binding protein 49 (RCN2), a protein localized in the lumen of endoplasmic reticulum. Functionally, monomer (alpha chain): Snake venom phospholipase A2 (PLA2) alpha chain that possesses the same high enzymatic activity than the heterotrimer. PLA2 catalyzes the calcium-dependent hydrolysis of the 2-acyl groups in 3-sn-phosphoglycerides. The polypeptide is Basic phospholipase A2 paradoxin-like alpha chain (Oxyuranus microlepidotus (Inland taipan)).